Consider the following 917-residue polypeptide: Protein FAN (917 aa).

Positions 176–247 (RLARTSFDKN…QDVRRIYKRR (72 aa)) constitute a GRAM domain. The BEACH-type PH domain occupies 189–286 (NISEKLHMEC…DRDDLYFYIA (98 aa)). Positions 290 to 575 (EHHVAEHTAE…QLFVTPHPRR (286 aa)) constitute a BEACH domain. WD repeat units lie at residues 628-658 (IHKE…KMFS), 670-700 (FSNM…YFYS), 712-740 (GHDD…KVWS), 761-791 (EHDV…NIWD), 803-833 (CHSG…NVID), and 884-914 (GHTG…IFWK).

As to expression, ubiquitous.

In terms of biological role, couples the p55 TNF-receptor (TNF-R55 / TNFR1) to neutral sphingomyelinase (N-SMASE). Specifically binds to the N-smase activation domain of TNF-R55. May regulate ceramide production by N-SMASE. The polypeptide is Protein FAN (NSMAF) (Homo sapiens (Human)).